Consider the following 811-residue polypeptide: Serine/threonine-protein kinase prpf4B (811 aa).

Disordered regions lie at residues 1–257, 288–341, 353–379, and 408–452; these read MVIE…TNEP, EKYN…NQIE, KDQN…EDLK, and VSIK…TNGG. The span at 46-71 shows a compositional bias: low complexity; sequence SSPASRETSSSKLMSPSKNQSSSSSR. Residues 81 to 202 show a composition bias toward basic and acidic residues; the sequence is RRKDERYSSS…DNMDSRDNKN (122 aa). The span at 203–215 shows a compositional bias: polar residues; it reads GSRQSINNNTLSY. A compositionally biased stretch (basic and acidic residues) spans 217-240; that stretch reads KQADRKDEVRVKDNISVNDDKTNH. Polar residues-rich tracts occupy residues 241 to 257 and 293 to 302; these read GENL…TNEP and EQPQPITSSL. Positions 310–327 are enriched in low complexity; it reads SNTNTNSNSTPVATTTTS. A Protein kinase domain is found at 490–808; sequence YQIFSPIGSG…PFEALNHEFL (319 aa). Residues 496 to 504 and K519 contribute to the ATP site; that span reads IGSGVFSTV. D619 serves as the catalytic Proton acceptor.

The protein belongs to the protein kinase superfamily. CMGC Ser/Thr protein kinase family. Post-translationally, phosphorylated. Autophosphorylated; phosphorylation inhibits interaction with its targets.

The protein resides in the nucleus. It localises to the chromosome. It is found in the centromere. The protein localises to the kinetochore. The catalysed reaction is L-seryl-[protein] + ATP = O-phospho-L-seryl-[protein] + ADP + H(+). It catalyses the reaction L-threonyl-[protein] + ATP = O-phospho-L-threonyl-[protein] + ADP + H(+). Serine/threonine kinase involved in spliceosomal assembly as well as mitosis and signaling regulation. This is Serine/threonine-protein kinase prpf4B (prp4k) from Dictyostelium discoideum (Social amoeba).